A 104-amino-acid chain; its full sequence is Protein S100-A14 (104 aa).

The region spanning 27–61 (KNFHQYSVEGGKETLTPSELRDLVTQQLPHLMPSN) is the EF-hand domain.

Belongs to the S-100 family. As to quaternary structure, homodimer. Interacts with AGER. Expressed at highest levels in colon and at moderate levels in thymus, kidney, liver, small intestine, and lung. Low expression in heart and no expression is seen in brain, skeletal muscle, spleen, placenta and peripheral blood leukocytes.

It localises to the cytoplasm. Modulates P53/TP53 protein levels, and thereby plays a role in the regulation of cell survival and apoptosis. Depending on the context, it can promote cell proliferation or apoptosis. Plays a role in the regulation of cell migration by modulating the levels of MMP2, a matrix protease that is under transcriptional control of P53/TP53. Does not bind calcium. The polypeptide is Protein S100-A14 (S100A14) (Homo sapiens (Human)).